The primary structure comprises 358 residues: Peptide chain release factor 1 (358 aa).

An N5-methylglutamine modification is found at Gln235.

The protein belongs to the prokaryotic/mitochondrial release factor family. Methylated by PrmC. Methylation increases the termination efficiency of RF1.

The protein resides in the cytoplasm. Peptide chain release factor 1 directs the termination of translation in response to the peptide chain termination codons UAG and UAA. This is Peptide chain release factor 1 from Neisseria meningitidis serogroup B (strain ATCC BAA-335 / MC58).